The following is a 494-amino-acid chain: Acetylcholine receptor subunit epsilon (494 aa).

The signal sequence occupies residues 1–20 (MTMALLGTLLLLALFGRSQG). At 21-239 (KNEELSLYHH…VIYTLIIRRK (219 aa)) the chain is on the extracellular side. 2 N-linked (GlcNAc...) asparagine glycosylation sites follow: asparagine 86 and asparagine 161. Cysteine 148 and cysteine 162 are disulfide-bonded. A helical membrane pass occupies residues 240–264 (PLFYVINIIVPCVLISGLVLLAYFL). At 265–272 (PAQAGGQK) the chain is on the cytoplasmic side. A helical transmembrane segment spans residues 273–291 (CTVSINVLLAQTVFLFLIA). The Extracellular segment spans residues 292-306 (QKIPETSLSVPLLGR). A helical transmembrane segment spans residues 307-328 (YLIFVMVVATLIVMNCVIVLNV). Residues 329–457 (SLRTPTTHAT…WVRMGKALDN (129 aa)) are Cytoplasmic-facing. A helical transmembrane segment spans residues 458-481 (VCFWAALVLFSVGSTLIFLGGYFN). Residues 482-494 (QVPDLPYPPCIQP) are Extracellular-facing.

Belongs to the ligand-gated ion channel (TC 1.A.9) family. Acetylcholine receptor (TC 1.A.9.1) subfamily. Epsilon/CHRNE sub-subfamily. As to quaternary structure, pentamer of two alpha chains, and one each of the beta, delta, and gamma (in immature muscle) or epsilon (in mature muscle) chains. The muscle heteropentamer composed of alpha-1, beta-1, delta, epsilon subunits interacts with the alpha-conotoxin ImII.

It is found in the postsynaptic cell membrane. Its subcellular location is the cell membrane. The enzyme catalyses K(+)(in) = K(+)(out). The catalysed reaction is Na(+)(in) = Na(+)(out). Its function is as follows. After binding acetylcholine, the AChR responds by an extensive change in conformation that affects all subunits and leads to opening of an ion-conducting channel across the plasma membrane. This Rattus norvegicus (Rat) protein is Acetylcholine receptor subunit epsilon (Chrne).